A 145-amino-acid chain; its full sequence is Small ribosomal subunit protein bS6 (145 aa).

It belongs to the bacterial ribosomal protein bS6 family.

Binds together with bS18 to 16S ribosomal RNA. The chain is Small ribosomal subunit protein bS6 from Mycoplasmopsis agalactiae (strain NCTC 10123 / CIP 59.7 / PG2) (Mycoplasma agalactiae).